Reading from the N-terminus, the 370-residue chain is Pyruvate dehydrogenase E1 component subunit alpha (370 aa).

As to quaternary structure, heterodimer of an alpha and a beta chain. It depends on thiamine diphosphate as a cofactor.

The catalysed reaction is N(6)-[(R)-lipoyl]-L-lysyl-[protein] + pyruvate + H(+) = N(6)-[(R)-S(8)-acetyldihydrolipoyl]-L-lysyl-[protein] + CO2. Functionally, the pyruvate dehydrogenase complex catalyzes the overall conversion of pyruvate to acetyl-CoA and CO(2). It contains multiple copies of three enzymatic components: pyruvate dehydrogenase (E1), dihydrolipoamide acetyltransferase (E2) and lipoamide dehydrogenase (E3). This is Pyruvate dehydrogenase E1 component subunit alpha (pdhA) from Staphylococcus epidermidis (strain ATCC 35984 / DSM 28319 / BCRC 17069 / CCUG 31568 / BM 3577 / RP62A).